We begin with the raw amino-acid sequence, 447 residues long: Serine--tRNA ligase (447 aa).

245–247 is a binding site for L-serine; sequence TAE. Residues 276-278 and valine 292 each bind ATP; that span reads RKE. Position 299 (glutamate 299) interacts with L-serine. 363-366 provides a ligand contact to ATP; that stretch reads ELAS. Residue threonine 398 participates in L-serine binding.

This sequence belongs to the class-II aminoacyl-tRNA synthetase family. Type-1 seryl-tRNA synthetase subfamily. As to quaternary structure, homodimer. The tRNA molecule binds across the dimer.

It localises to the cytoplasm. The enzyme catalyses tRNA(Ser) + L-serine + ATP = L-seryl-tRNA(Ser) + AMP + diphosphate + H(+). It carries out the reaction tRNA(Sec) + L-serine + ATP = L-seryl-tRNA(Sec) + AMP + diphosphate + H(+). The protein operates within aminoacyl-tRNA biosynthesis; selenocysteinyl-tRNA(Sec) biosynthesis; L-seryl-tRNA(Sec) from L-serine and tRNA(Sec): step 1/1. In terms of biological role, catalyzes the attachment of serine to tRNA(Ser). Is also able to aminoacylate tRNA(Sec) with serine, to form the misacylated tRNA L-seryl-tRNA(Sec), which will be further converted into selenocysteinyl-tRNA(Sec). This is Serine--tRNA ligase from Pyrobaculum neutrophilum (strain DSM 2338 / JCM 9278 / NBRC 100436 / V24Sta) (Thermoproteus neutrophilus).